The sequence spans 590 residues: Potassium-transporting ATPase potassium-binding subunit (590 aa).

A run of 12 helical transmembrane segments spans residues 3 to 23 (AFLL…KPLG), 63 to 83 (HYAL…YALQ), 134 to 154 (GLAV…IALI), 177 to 197 (VYVL…QGVI), 284 to 304 (FVQM…FGGM), 312 to 332 (WAVL…LAWA), 359 to 379 (FGIV…CGAV), 388 to 408 (ALGG…FGGV), 411 to 431 (GLYG…LMIG), 451 to 471 (IAIL…VVVT), 515 to 535 (LALG…VLAM), and 558 to 578 (LFVV…YIPA).

This sequence belongs to the KdpA family. The system is composed of three essential subunits: KdpA, KdpB and KdpC.

The protein localises to the cell inner membrane. Functionally, part of the high-affinity ATP-driven potassium transport (or Kdp) system, which catalyzes the hydrolysis of ATP coupled with the electrogenic transport of potassium into the cytoplasm. This subunit binds the periplasmic potassium ions and delivers the ions to the membrane domain of KdpB through an intramembrane tunnel. The sequence is that of Potassium-transporting ATPase potassium-binding subunit from Ralstonia pickettii (strain 12J).